We begin with the raw amino-acid sequence, 112 residues long: MDRDRKRVKMEKEDDEEEKMEKLYTVLKNAREMRKYVNSSMEKKRQEEEERARVRRFPSFQPEDFIFMNKAEANNIEKAANESSSASNEYDGSKEKQEGSETNVCLDLNLSL.

Disordered stretches follow at residues 1–20 (MDRD…EEKM) and 77–112 (EKAA…NLSL). 2 coiled-coil regions span residues 1-35 (MDRD…EMRK) and 69-96 (NKAE…SKEK). Residues 77-89 (EKAANESSSASNE) are compositionally biased toward low complexity.

The protein belongs to the NPR1-interactor family. Interacts with NPR1 C-terminal region.

The protein localises to the nucleus. The polypeptide is Protein NIM1-INTERACTING 3 (Arabidopsis thaliana (Mouse-ear cress)).